A 442-amino-acid polypeptide reads, in one-letter code: Probable carboxypeptidase PADG_04062 (442 aa).

The N-terminal stretch at 1–20 (MKLQYLVALLSVQAVPPVTA) is a signal peptide. Asn-102 carries N-linked (GlcNAc...) asparagine glycosylation. Asp-160 is a binding site for Zn(2+). Catalysis depends on Glu-192, which acts as the Proton acceptor. Glu-193 lines the Zn(2+) pocket. Asn-343 carries an N-linked (GlcNAc...) asparagine glycan.

The protein belongs to the peptidase M20A family. The cofactor is Zn(2+).

It is found in the secreted. In Paracoccidioides brasiliensis (strain Pb18), this protein is Probable carboxypeptidase PADG_04062.